The following is a 164-amino-acid chain: Peptidyl-prolyl cis-trans isomerase (164 aa).

The region spanning 7 to 163 (FFDLQANGEN…KKITIADCGQ (157 aa)) is the PPIase cyclophilin-type domain.

Belongs to the cyclophilin-type PPIase family. PPIase A subfamily.

Its subcellular location is the cytoplasm. It carries out the reaction [protein]-peptidylproline (omega=180) = [protein]-peptidylproline (omega=0). With respect to regulation, binds cyclosporin A (CsA). CsA mediates some of its effects via an inhibitory action on PPIase. Functionally, PPIases accelerate the folding of proteins. It catalyzes the cis-trans isomerization of proline imidic peptide bonds in oligopeptides. The polypeptide is Peptidyl-prolyl cis-trans isomerase (Hemicentrotus pulcherrimus (Sea urchin)).